The sequence spans 121 residues: Large ribosomal subunit protein uL14 (121 aa).

Belongs to the universal ribosomal protein uL14 family. Part of the 50S ribosomal subunit. Forms a cluster with proteins L3 and L19. In the 70S ribosome, L14 and L19 interact and together make contacts with the 16S rRNA in bridges B5 and B8.

In terms of biological role, binds to 23S rRNA. Forms part of two intersubunit bridges in the 70S ribosome. In Prochlorococcus marinus (strain NATL1A), this protein is Large ribosomal subunit protein uL14.